Reading from the N-terminus, the 98-residue chain is NADH-ubiquinone oxidoreductase chain 4L (98 aa).

Transmembrane regions (helical) follow at residues 1–21, 30–50, and 61–81; these read MSLV…GLLM, LLCL…TILT, and IVLL…LVMV.

Belongs to the complex I subunit 4L family. Core subunit of respiratory chain NADH dehydrogenase (Complex I) which is composed of 45 different subunits.

It localises to the mitochondrion inner membrane. It catalyses the reaction a ubiquinone + NADH + 5 H(+)(in) = a ubiquinol + NAD(+) + 4 H(+)(out). Functionally, core subunit of the mitochondrial membrane respiratory chain NADH dehydrogenase (Complex I) which catalyzes electron transfer from NADH through the respiratory chain, using ubiquinone as an electron acceptor. Part of the enzyme membrane arm which is embedded in the lipid bilayer and involved in proton translocation. This Crocidura russula (Greater white-toothed shrew) protein is NADH-ubiquinone oxidoreductase chain 4L (MT-ND4L).